A 513-amino-acid chain; its full sequence is ATP synthase subunit alpha, mitochondrial (513 aa).

An ATP-binding site is contributed by 170–177 (GDRQTGKT).

The protein belongs to the ATPase alpha/beta chains family. As to quaternary structure, F-type ATPases have 2 components, CF(1) - the catalytic core - and CF(0) - the membrane proton channel. CF(1) has five subunits: alpha(3), beta(3), gamma(1), delta(1), epsilon(1). CF(0) has three main subunits: a, b and c.

The protein localises to the mitochondrion. It is found in the mitochondrion inner membrane. Functionally, mitochondrial membrane ATP synthase (F(1)F(0) ATP synthase or Complex V) produces ATP from ADP in the presence of a proton gradient across the membrane which is generated by electron transport complexes of the respiratory chain. F-type ATPases consist of two structural domains, F(1) - containing the extramembraneous catalytic core, and F(0) - containing the membrane proton channel, linked together by a central stalk and a peripheral stalk. During catalysis, ATP synthesis in the catalytic domain of F(1) is coupled via a rotary mechanism of the central stalk subunits to proton translocation. Subunits alpha and beta form the catalytic core in F(1). Rotation of the central stalk against the surrounding alpha(3)beta(3) subunits leads to hydrolysis of ATP in three separate catalytic sites on the beta subunits. Subunit alpha does not bear the catalytic high-affinity ATP-binding sites. In Marchantia polymorpha (Common liverwort), this protein is ATP synthase subunit alpha, mitochondrial (ATPA).